A 259-amino-acid polypeptide reads, in one-letter code: MGSGWLLRSIICLNGTKKNKSNRGNVHSETSNRVKPVESSSAASTKLTVEVAVIRIQKAFRAFKARKRLCSLKSARRFNSLIQGHTVMNQTSTALNVIHSWYDIQNQIRARRLYMVTQGRLQHKRLENRLKLEIKLHELEVEWCGGSETMEEILAKIQQKEEATVKRERAMAYAFSHQWRANATQYLGQASFNLGKESWGWSWKERWIAARPWEIRAQCYVVKPIKPSKKPEKSSPNNVITKTSAKPDEVGNSKKPGSG.

Positions 18–39 are disordered; that stretch reads KNKSNRGNVHSETSNRVKPVES. The IQ domain maps to 50–77; that stretch reads EVAVIRIQKAFRAFKARKRLCSLKSARR. The tract at residues 61–71 is calmodulin-binding; sequence RAFKARKRLCS. The segment at 226–259 is disordered; it reads KPSKKPEKSSPNNVITKTSAKPDEVGNSKKPGSG.

It belongs to the IQD family. As to quaternary structure, binds to multiple calmodulin (CaM) in the presence of Ca(2+) and CaM-like proteins.

It localises to the nucleus. It is found in the cytoplasm. The protein resides in the cytoskeleton. Its function is as follows. May be involved in cooperative interactions with calmodulins or calmodulin-like proteins. Recruits calmodulin proteins to microtubules, thus being a potential scaffold in cellular signaling and trafficking. May associate with nucleic acids and regulate gene expression at the transcriptional or post-transcriptional level. In Arabidopsis thaliana (Mouse-ear cress), this protein is Protein IQ-DOMAIN 10.